Consider the following 138-residue polypeptide: Phosphoribosyl-AMP cyclohydrolase (138 aa).

The tract at residues 1 to 23 (MSEQSAPSPTPAAELSSDPASPL) is disordered. Aspartate 100 contributes to the Mg(2+) binding site. Cysteine 101 is a Zn(2+) binding site. Residues aspartate 102 and aspartate 104 each coordinate Mg(2+). Cysteine 117 and cysteine 124 together coordinate Zn(2+).

The protein belongs to the PRA-CH family. Homodimer. Requires Mg(2+) as cofactor. It depends on Zn(2+) as a cofactor.

It is found in the cytoplasm. The enzyme catalyses 1-(5-phospho-beta-D-ribosyl)-5'-AMP + H2O = 1-(5-phospho-beta-D-ribosyl)-5-[(5-phospho-beta-D-ribosylamino)methylideneamino]imidazole-4-carboxamide. It functions in the pathway amino-acid biosynthesis; L-histidine biosynthesis; L-histidine from 5-phospho-alpha-D-ribose 1-diphosphate: step 3/9. Its function is as follows. Catalyzes the hydrolysis of the adenine ring of phosphoribosyl-AMP. The polypeptide is Phosphoribosyl-AMP cyclohydrolase (Paenarthrobacter aurescens (strain TC1)).